The chain runs to 811 residues: Probable glutamine--tRNA ligase (811 aa).

The disordered stretch occupies residues 190–217 (DAAAGKKKGAKAKNSKQKTVDSGKAKEQ). Over residues 194 to 205 (GKKKGAKAKNSK) the composition is skewed to basic residues. The span at 207–217 (KTVDSGKAKEQ) shows a compositional bias: basic and acidic residues. Residues 269-279 (PEPNGYLHIGH) carry the 'HIGH' region motif. ATP-binding positions include 270 to 272 (EPN) and 276 to 282 (HIGHSKA). L-glutamine-binding residues include Asp302 and Tyr447. ATP is bound by residues Thr466, 495 to 496 (RL), and 503 to 505 (MSK). The 'KMSKS' region signature appears at 502 to 506 (LMSKR).

Belongs to the class-I aminoacyl-tRNA synthetase family.

The protein localises to the cytoplasm. It catalyses the reaction tRNA(Gln) + L-glutamine + ATP = L-glutaminyl-tRNA(Gln) + AMP + diphosphate. This chain is Probable glutamine--tRNA ligase (qrs1), found in Schizosaccharomyces pombe (strain 972 / ATCC 24843) (Fission yeast).